The following is a 127-amino-acid chain: UPF0325 protein VC_2264 (127 aa).

This sequence belongs to the UPF0325 family.

The sequence is that of UPF0325 protein VC_2264 from Vibrio cholerae serotype O1 (strain ATCC 39315 / El Tor Inaba N16961).